Here is a 365-residue protein sequence, read N- to C-terminus: Chorismate synthase (365 aa).

Arg48 is a binding site for NADP(+). FMN is bound by residues 125–127 (RSS), 238–239 (NA), Gly278, 293–297 (KPTSS), and Arg319.

Belongs to the chorismate synthase family. As to quaternary structure, homotetramer. The cofactor is FMNH2.

The enzyme catalyses 5-O-(1-carboxyvinyl)-3-phosphoshikimate = chorismate + phosphate. It participates in metabolic intermediate biosynthesis; chorismate biosynthesis; chorismate from D-erythrose 4-phosphate and phosphoenolpyruvate: step 7/7. Its function is as follows. Catalyzes the anti-1,4-elimination of the C-3 phosphate and the C-6 proR hydrogen from 5-enolpyruvylshikimate-3-phosphate (EPSP) to yield chorismate, which is the branch point compound that serves as the starting substrate for the three terminal pathways of aromatic amino acid biosynthesis. This reaction introduces a second double bond into the aromatic ring system. This is Chorismate synthase from Marinomonas sp. (strain MWYL1).